The following is a 201-amino-acid chain: Recombination protein RecR (201 aa).

Residues 57–72 (CADCRTFTEQDVCNIC) form a C4-type zinc finger. In terms of domain architecture, Toprim spans 81–176 (GQICVVESPA…SASRIAHGVP (96 aa)).

Belongs to the RecR family.

Functionally, may play a role in DNA repair. It seems to be involved in an RecBC-independent recombinational process of DNA repair. It may act with RecF and RecO. The protein is Recombination protein RecR of Enterobacter sp. (strain 638).